We begin with the raw amino-acid sequence, 568 residues long: Potassium-transporting ATPase potassium-binding subunit (568 aa).

The next 10 helical transmembrane spans lie at 7–27 (AEIAFILGLTVALGWPLGLFL), 65–85 (SYALALLAFSAASFILLYAIL), 135–155 (AGLTSHNFLSAAAGIAVAAAV), 177–197 (VSLYLLLPLSIVIALVFVALG), 254–274 (LTNLIEIVEMNVLGFACVVAF), 286–306 (ALITVMAIFVAVAASVIYWTE), 383–403 (GLYGMIVLALIAVFVAGLMVG), 422–442 (MLAVLILPLAILGFSAAAAVL), 489–509 (LGIAMLLGRFGYVIPVLAIAG), and 530–550 (LFIGLLIGVILILGGLQFFPA).

The protein belongs to the KdpA family. In terms of assembly, the system is composed of three essential subunits: KdpA, KdpB and KdpC.

It localises to the cell inner membrane. Part of the high-affinity ATP-driven potassium transport (or Kdp) system, which catalyzes the hydrolysis of ATP coupled with the electrogenic transport of potassium into the cytoplasm. This subunit binds the periplasmic potassium ions and delivers the ions to the membrane domain of KdpB through an intramembrane tunnel. The protein is Potassium-transporting ATPase potassium-binding subunit of Beijerinckia indica subsp. indica (strain ATCC 9039 / DSM 1715 / NCIMB 8712).